A 276-amino-acid chain; its full sequence is Undecaprenyl-diphosphatase (276 aa).

6 consecutive transmembrane segments (helical) span residues 43–63 (RAMA…VWEF), 85–105 (LNLL…ADTI), 109–129 (LFNA…MLWA), 183–203 (AATE…AVYS), 218–238 (VFAI…RALL), and 254–274 (IAFG…WASA).

It belongs to the UppP family.

The protein localises to the cell inner membrane. It catalyses the reaction di-trans,octa-cis-undecaprenyl diphosphate + H2O = di-trans,octa-cis-undecaprenyl phosphate + phosphate + H(+). Functionally, catalyzes the dephosphorylation of undecaprenyl diphosphate (UPP). Confers resistance to bacitracin. In Pseudomonas syringae pv. tomato (strain ATCC BAA-871 / DC3000), this protein is Undecaprenyl-diphosphatase.